A 66-amino-acid polypeptide reads, in one-letter code: Large ribosomal subunit protein uL29 (66 aa).

This sequence belongs to the universal ribosomal protein uL29 family.

This chain is Large ribosomal subunit protein uL29, found in Methylibium petroleiphilum (strain ATCC BAA-1232 / LMG 22953 / PM1).